Consider the following 361-residue polypeptide: Adenosine kinase (361 aa).

A Nuclear localization signal motif is present at residues 7-15 (PKPKKLKVE). Asp34 contributes to the adenosine binding site. Ser48 is a binding site for Mg(2+). Residue Tyr76 is modified to Phosphotyrosine. Asn147 lines the Mg(2+) pocket. Gln305 is a binding site for adenosine. Asp316 is a catalytic residue. The active-site Proton acceptor is the Asp316.

Belongs to the carbohydrate kinase PfkB family. Monomer. The cofactor is Mg(2+). Widely expressed. Highly expressed in liver, testis, kidney and spleen (at protein level). In brain, expression in most forebrain structures and the cerebellum is higher than in the midbrain and brainstem (at protein level). In terms of tissue distribution, major isoform in testis and kidney. Not detected in most brain regions, except in the cerebellum, where it is expressed at a similar level to that of isoform 2 (at protein level). As to expression, major isoform in spleen and in most brain regions, except in the cerebellum, where it is expressed at a similar level to that of isoform 1 (at protein level).

Its subcellular location is the nucleus. The protein localises to the cytoplasm. It carries out the reaction adenosine + ATP = AMP + ADP + H(+). Its pathway is purine metabolism; AMP biosynthesis via salvage pathway; AMP from adenosine: step 1/1. Its activity is regulated as follows. Activity is inhibited by 5-iodotubercidin and 5'-amino-5'-deoxyadenosine. Catalyzes the phosphorylation of the purine nucleoside adenosine at the 5' position in an ATP-dependent manner. Serves as a potential regulator of concentrations of extracellular adenosine and intracellular adenine nucleotides. This chain is Adenosine kinase (Adk), found in Mus musculus (Mouse).